A 100-amino-acid chain; its full sequence is Nucleoid-associated protein ckrop_0143 (100 aa).

This sequence belongs to the YbaB/EbfC family. In terms of assembly, homodimer.

The protein resides in the cytoplasm. It is found in the nucleoid. Functionally, binds to DNA and alters its conformation. May be involved in regulation of gene expression, nucleoid organization and DNA protection. This is Nucleoid-associated protein ckrop_0143 from Corynebacterium kroppenstedtii (strain DSM 44385 / JCM 11950 / CIP 105744 / CCUG 35717).